Reading from the N-terminus, the 316-residue chain is Alpha- and gamma-adaptin-binding protein p34 (316 aa).

The disordered stretch occupies residues 198 to 232 (ASAESCHSEQQEPSPTAERTESLPGHHSGACGSAG). Low complexity predominate over residues 222–232 (GHHSGACGSAG). 2 positions are modified to phosphoserine: S311 and S312.

Associated with AP-1 and AP-2 complexes.

Its subcellular location is the cytoplasm. The protein resides in the cytosol. May be involved in endocytic recycling of growth factor receptors such as EGFR. The chain is Alpha- and gamma-adaptin-binding protein p34 (Aagab) from Mus musculus (Mouse).